We begin with the raw amino-acid sequence, 218 residues long: Glutathione S-transferase Mu 7 (218 aa).

Residues 1–88 enclose the GST N-terminal domain; that stretch reads MPMTLGYWDI…YLGRKHNLCG (88 aa). Glutathione contacts are provided by residues 7–8, 46–50, 59–60, and 72–73; these read YW, WLNEK, NL, and QS. Residues 90–208 enclose the GST C-terminal domain; it reads TEEERIRVDI…KTSRFLPRPM (119 aa). Residue Tyr116 coordinates substrate.

This sequence belongs to the GST superfamily. Mu family. As to quaternary structure, homodimer.

The protein resides in the cytoplasm. The enzyme catalyses RX + glutathione = an S-substituted glutathione + a halide anion + H(+). In terms of biological role, conjugation of reduced glutathione to a wide number of exogenous and endogenous hydrophobic electrophiles. This chain is Glutathione S-transferase Mu 7 (Gstm7), found in Mus musculus (Mouse).